Consider the following 184-residue polypeptide: CASP-like protein 1U2 (184 aa).

Over 1–16 (MSYGCQVSDDEPNGSK) the chain is Cytoplasmic. The chain crosses the membrane as a helical span at residues 17-37 (AVSLLLRLSTLALALTSAVVM). The Extracellular portion of the chain corresponds to 38 to 62 (ATASECTVVQLNGVVATITYKDFPP). The chain crosses the membrane as a helical span at residues 63 to 83 (FVYLVGFNIAAAMLEAAAIYL). Residues 84–100 (RLSTGGGDDDDEGFKGK) lie on the Cytoplasmic side of the membrane. A helical membrane pass occupies residues 101 to 121 (LPGILLVVIDVAVQALVYTAT). Residues 122–153 (GGAFAAVSAYGPQINACGAGAGRFCGQVHQSK) are Extracellular-facing. A helical membrane pass occupies residues 154–174 (LLSFAGSAAVGLAVVFRDVSL). Residues 175 to 184 (PFSLWPTSSD) lie on the Cytoplasmic side of the membrane.

It belongs to the Casparian strip membrane proteins (CASP) family. In terms of assembly, homodimer and heterodimers.

The protein localises to the cell membrane. The polypeptide is CASP-like protein 1U2 (Oryza sativa subsp. japonica (Rice)).